The sequence spans 227 residues: Transcription elongation factor A protein-like 2 (227 aa).

2 disordered regions span residues M1–G145 and F202–V227. Basic and acidic residues-rich tracts occupy residues I18–N43, T50–S82, T90–E113, S120–R136, and G206–V227.

This sequence belongs to the TFS-II family. TFA subfamily.

The protein localises to the nucleus. Functionally, may be involved in transcriptional regulation. This is Transcription elongation factor A protein-like 2 (TCEAL2) from Homo sapiens (Human).